The sequence spans 159 residues: SsrA-binding protein (159 aa).

This sequence belongs to the SmpB family.

The protein resides in the cytoplasm. Its function is as follows. Required for rescue of stalled ribosomes mediated by trans-translation. Binds to transfer-messenger RNA (tmRNA), required for stable association of tmRNA with ribosomes. tmRNA and SmpB together mimic tRNA shape, replacing the anticodon stem-loop with SmpB. tmRNA is encoded by the ssrA gene; the 2 termini fold to resemble tRNA(Ala) and it encodes a 'tag peptide', a short internal open reading frame. During trans-translation Ala-aminoacylated tmRNA acts like a tRNA, entering the A-site of stalled ribosomes, displacing the stalled mRNA. The ribosome then switches to translate the ORF on the tmRNA; the nascent peptide is terminated with the 'tag peptide' encoded by the tmRNA and targeted for degradation. The ribosome is freed to recommence translation, which seems to be the essential function of trans-translation. This Idiomarina loihiensis (strain ATCC BAA-735 / DSM 15497 / L2-TR) protein is SsrA-binding protein.